The primary structure comprises 240 residues: RNA-binding protein pno1 (240 aa).

The segment covering 1 to 15 has biased composition (basic and acidic residues); that stretch reads MEAENIRADAFEPAK. Residues 1–61 are disordered; the sequence is MEAENIRADA…APPKAKRARS (61 aa). Positions 164–213 constitute a KH domain; the sequence is QSRAIGRLAGKGGRTKFTIENVTKTRIVLADSKIHILGSYQNIQLARRAV.

The protein belongs to the PNO1 family.

Its subcellular location is the nucleus. It localises to the nucleolus. The protein is RNA-binding protein pno1 (l(1)G0004) of Drosophila melanogaster (Fruit fly).